The sequence spans 117 residues: uncharacterized protein (117 aa).

This is an uncharacterized protein from Saccharomyces cerevisiae (strain ATCC 204508 / S288c) (Baker's yeast).